The primary structure comprises 549 residues: Undecaprenyl phosphate-alpha-4-amino-4-deoxy-L-arabinose arabinosyl transferase (549 aa).

The next 12 membrane-spanning stretches (helical) occupy residues 9–29 (LLLI…GLWI), 80–100 (LFGV…LAYL), 112–132 (SLAC…SGYA), 136–156 (PQFT…LDAG), 166–186 (ILLG…AWLL), 204–224 (LLGY…PWAL), 256–276 (PWWF…GLLP), 288–308 (QAPV…FSLS), 312–332 (LPTY…HALV), 346–366 (NGLL…YLQL), 376–396 (FELF…LAQW), and 402–422 (AWAA…AAMP).

The protein belongs to the glycosyltransferase 83 family.

It is found in the cell inner membrane. It carries out the reaction 4-amino-4-deoxy-alpha-L-arabinopyranosyl di-trans,octa-cis-undecaprenyl phosphate + lipid IVA = lipid IIA + di-trans,octa-cis-undecaprenyl phosphate.. It participates in lipopolysaccharide metabolism; 4-amino-4-deoxy-beta-L-arabinose-lipid A biosynthesis. Catalyzes the transfer of the L-Ara4N moiety of the glycolipid undecaprenyl phosphate-alpha-L-Ara4N to lipid A. The modified arabinose is attached to lipid A and is required for resistance to polymyxin and cationic antimicrobial peptides. This chain is Undecaprenyl phosphate-alpha-4-amino-4-deoxy-L-arabinose arabinosyl transferase, found in Pseudomonas aeruginosa (strain UCBPP-PA14).